Reading from the N-terminus, the 309-residue chain is Tagatose-6-phosphate kinase (309 aa).

It belongs to the carbohydrate kinase PfkB family. LacC subfamily.

It carries out the reaction D-tagatofuranose 6-phosphate + ATP = D-tagatofuranose 1,6-bisphosphate + ADP + H(+). It participates in carbohydrate metabolism; D-tagatose 6-phosphate degradation; D-glyceraldehyde 3-phosphate and glycerone phosphate from D-tagatose 6-phosphate: step 1/2. This Streptococcus pyogenes serotype M4 (strain MGAS10750) protein is Tagatose-6-phosphate kinase.